The primary structure comprises 92 residues: UPF0223 protein SPCG_1392 (92 aa).

It belongs to the UPF0223 family.

This chain is UPF0223 protein SPCG_1392, found in Streptococcus pneumoniae (strain CGSP14).